The chain runs to 115 residues: UPF0102 protein NMCC_2054 (115 aa).

This sequence belongs to the UPF0102 family.

This is UPF0102 protein NMCC_2054 from Neisseria meningitidis serogroup C (strain 053442).